The primary structure comprises 301 residues: Nucleosome assembly protein 1;3 (301 aa).

Positions 15–69 (VETLKNKLQALAEQHVDVLESLAPVVRKRVDVLIEIQSQHDELEAKFLEEKAALE) form a coiled coil. A Nuclear export signal motif is present at residues 36-51 (LAPVVRKRVDVLIEIQ). The tract at residues 278 to 301 (DEDYGASWVDDEEDDDDEYSDEEA) is disordered.

This sequence belongs to the nucleosome assembly protein (NAP) family.

Its subcellular location is the nucleus. It localises to the cytoplasm. Functionally, may modulate chromatin structure by regulation of nucleosome assembly/disassembly. The sequence is that of Nucleosome assembly protein 1;3 (NAP1;3) from Oryza sativa subsp. japonica (Rice).